Consider the following 164-residue polypeptide: Peptide methionine sulfoxide reductase MsrA (164 aa).

Cysteine 16 is an active-site residue.

This sequence belongs to the MsrA Met sulfoxide reductase family.

It carries out the reaction L-methionyl-[protein] + [thioredoxin]-disulfide + H2O = L-methionyl-(S)-S-oxide-[protein] + [thioredoxin]-dithiol. It catalyses the reaction [thioredoxin]-disulfide + L-methionine + H2O = L-methionine (S)-S-oxide + [thioredoxin]-dithiol. Its function is as follows. Has an important function as a repair enzyme for proteins that have been inactivated by oxidation. Catalyzes the reversible oxidation-reduction of methionine sulfoxide in proteins to methionine. This chain is Peptide methionine sulfoxide reductase MsrA, found in Methanoculleus marisnigri (strain ATCC 35101 / DSM 1498 / JR1).